An 83-amino-acid chain; its full sequence is Putative potassium channel toxin Ts20 (83 aa).

An N-terminal signal peptide occupies residues 1–18 (MKLDIVLIMFVTFSTTLA).

Post-translationally, contains 3 disulfide bonds. As to expression, expressed by the venom gland.

It localises to the secreted. Functionally, reversibly inhibits potassium channels. This chain is Putative potassium channel toxin Ts20, found in Tityus serrulatus (Brazilian scorpion).